The primary structure comprises 279 residues: Syntaxin-21 (279 aa).

The tract at residues 1-34 (MSFQDLEAGTRSPAPNRFTGGRQQRPSSRGDPSQ) is disordered. Serine 2 is modified (N-acetylserine). Over 2 to 258 (SFQDLEAGTR…AKTQRSNSSL (257 aa)) the chain is Cytoplasmic. Positions 21–31 (GRQQRPSSRGD) are enriched in polar residues. A coiled-coil region spans residues 65-94 (ELRDKLQKTRLQISELVKNTSAKLKEASEA). The t-SNARE coiled-coil homology domain occupies 186 to 248 (EAIIEEREQG…TQATVQLRKA (63 aa)). Residues 259 to 279 (TCLLILIFGIVLLIVIIVVLV) form a helical; Anchor for type IV membrane protein membrane-spanning segment.

The protein belongs to the syntaxin family. In terms of assembly, interacts with VTI11 and SYP51 to form a t-SNARE complex and with alpha-SNAP to form a 20S complex. In terms of tissue distribution, a high level expression is seen in the roots while a low level expression is seen in the leaves.

Its subcellular location is the prevacuolar compartment membrane. May function in the docking or fusion of transport vesicles with the prevacuolar membrane. The polypeptide is Syntaxin-21 (SYP21) (Arabidopsis thaliana (Mouse-ear cress)).